The sequence spans 37 residues: Cytochrome b6-f complex subunit 5 (37 aa).

The chain crosses the membrane as a helical span at residues 5–25 (LLSGIVLGLIPITLAGLFVTA).

It belongs to the PetG family. As to quaternary structure, the 4 large subunits of the cytochrome b6-f complex are cytochrome b6, subunit IV (17 kDa polypeptide, PetD), cytochrome f and the Rieske protein, while the 4 small subunits are PetG, PetL, PetM and PetN. The complex functions as a dimer.

It localises to the plastid. Its subcellular location is the chloroplast thylakoid membrane. Its function is as follows. Component of the cytochrome b6-f complex, which mediates electron transfer between photosystem II (PSII) and photosystem I (PSI), cyclic electron flow around PSI, and state transitions. PetG is required for either the stability or assembly of the cytochrome b6-f complex. The sequence is that of Cytochrome b6-f complex subunit 5 from Angiopteris evecta (Mule's foot fern).